The chain runs to 89 residues: Islet amyloid polypeptide (89 aa).

Residues 1–22 (MCLLKLPVVLIVLLVALHHLKA) form the signal peptide. Positions 23–31 (TPIESNQVE) are excised as a propeptide. A disulfide bridge connects residues cysteine 35 and cysteine 40. Tyrosine amide is present on tyrosine 70. A propeptide spanning residues 74-89 (STVDILNREPLNYLPF) is cleaved from the precursor.

This sequence belongs to the calcitonin family. As to quaternary structure, can form homodimers. Interacts with IDE and INS. Interaction with INS inhibits homodimerization and fibril formation.

The protein localises to the secreted. Amylin/IAPP is a glucoregulatory peptide hormone that plays an important role in the regulation of energy homeostasis. Selectively inhibits insulin-stimulated glucose utilization and glycogen deposition in muscle, while not affecting adipocyte glucose metabolism. IAPP function is mediated by the CALCR-RAMPs (AMYRs) receptor complexes. Amylin can also bind CALCR receptor in the absence of RAMPs, although it is more selective for AMYRs. The polypeptide is Islet amyloid polypeptide (IAPP) (Felis catus (Cat)).